A 1072-amino-acid polypeptide reads, in one-letter code: Error-prone DNA polymerase (1072 aa).

It belongs to the DNA polymerase type-C family. DnaE2 subfamily.

It localises to the cytoplasm. The catalysed reaction is DNA(n) + a 2'-deoxyribonucleoside 5'-triphosphate = DNA(n+1) + diphosphate. Its function is as follows. DNA polymerase involved in damage-induced mutagenesis and translesion synthesis (TLS). It is not the major replicative DNA polymerase. The sequence is that of Error-prone DNA polymerase from Burkholderia pseudomallei (strain K96243).